The chain runs to 599 residues: Thiamine transporter THI72 (599 aa).

11 helical membrane-spanning segments follow: residues 42–62 (WGFWSNFAYWGVLSFNVGMWI), 78–98 (IGAFIIADLLTILFALANSCP), 112–132 (FVFGIYGSALGIIIRILMSIV), 174–194 (LIGFIIFHILTAFCYFMKPYH), 197–217 (YILIWSCVGTFFAMLGMVIYL), 280–300 (IVALLIPATLIPVFGIIGASA), 333–353 (FFCGFCFVMSQISYTISNCGF), 372–392 (GAIFAACVSWACLPWNFYNSS), 395–415 (FLTVMSSFGVVMTPIITVMIC), 447–467 (AIVAWVCGMAPGLPGIAWEVN), and 484–504 (SFFSFLISFFVYWGLCLLFPF). The interval 553-599 (HEYKPESSDDELPELTKTSSENTKVFEIVHQKDNEKESSTSSEKQIA) is disordered. Phosphoserine occurs at positions 560 and 572. Basic and acidic residues predominate over residues 579-590 (EIVHQKDNEKES).

It belongs to the purine-cytosine permease (2.A.39) family.

The protein localises to the membrane. Functionally, low affinity thiamine transporter responsible for intake of thiamine. It is possible that the primary function is the uptake of closely related compounds and that thiamine transport is a secondary activity of these proteins. In Saccharomyces cerevisiae (strain ATCC 204508 / S288c) (Baker's yeast), this protein is Thiamine transporter THI72 (THI72).